The primary structure comprises 126 residues: Aspartate 1-decarboxylase (126 aa).

The active-site Schiff-base intermediate with substrate; via pyruvic acid is the S25. S25 bears the Pyruvic acid (Ser) mark. Residue T57 coordinates substrate. Y58 functions as the Proton donor in the catalytic mechanism. Residue 72 to 74 (GAA) participates in substrate binding.

The protein belongs to the PanD family. In terms of assembly, heterooctamer of four alpha and four beta subunits. The cofactor is pyruvate. Is synthesized initially as an inactive proenzyme, which is activated by self-cleavage at a specific serine bond to produce a beta-subunit with a hydroxyl group at its C-terminus and an alpha-subunit with a pyruvoyl group at its N-terminus.

Its subcellular location is the cytoplasm. The enzyme catalyses L-aspartate + H(+) = beta-alanine + CO2. The protein operates within cofactor biosynthesis; (R)-pantothenate biosynthesis; beta-alanine from L-aspartate: step 1/1. Functionally, catalyzes the pyruvoyl-dependent decarboxylation of aspartate to produce beta-alanine. This Campylobacter jejuni subsp. jejuni serotype O:23/36 (strain 81-176) protein is Aspartate 1-decarboxylase.